The following is a 1232-amino-acid chain: DNA-directed RNA polymerase subunit beta (1232 aa).

Residues 1170 to 1232 are disordered; the sequence is SVDEDADELE…LDLDDFGDEH (63 aa). Residues 1171–1180 show a composition bias toward acidic residues; sequence VDEDADELEV. Basic and acidic residues predominate over residues 1189–1198; it reads PEEKEEKEKE. Residues 1199–1232 show a composition bias toward acidic residues; sequence DSDEYDDLREEDVEPDLEELSLDDLDLDDFGDEH.

The protein belongs to the RNA polymerase beta chain family. The RNAP catalytic core consists of 2 alpha, 1 beta, 1 beta' and 1 omega subunit. When a sigma factor is associated with the core the holoenzyme is formed, which can initiate transcription.

The catalysed reaction is RNA(n) + a ribonucleoside 5'-triphosphate = RNA(n+1) + diphosphate. In terms of biological role, DNA-dependent RNA polymerase catalyzes the transcription of DNA into RNA using the four ribonucleoside triphosphates as substrates. The protein is DNA-directed RNA polymerase subunit beta of Clostridium botulinum (strain Okra / Type B1).